The sequence spans 177 residues: Large ribosomal subunit protein uL6 (177 aa).

Residues 152-171 are compositionally biased toward basic and acidic residues; the sequence is RPPEPYKGKGVRYDDEEVRR. The tract at residues 152–177 is disordered; it reads RPPEPYKGKGVRYDDEEVRRKEAKKK.

This sequence belongs to the universal ribosomal protein uL6 family. Part of the 50S ribosomal subunit.

This protein binds to the 23S rRNA, and is important in its secondary structure. It is located near the subunit interface in the base of the L7/L12 stalk, and near the tRNA binding site of the peptidyltransferase center. The chain is Large ribosomal subunit protein uL6 from Shewanella oneidensis (strain ATCC 700550 / JCM 31522 / CIP 106686 / LMG 19005 / NCIMB 14063 / MR-1).